The chain runs to 759 residues: Fidgetin (759 aa).

4 disordered regions span residues 89–111 (SNYS…PWQP), 200–237 (SQAT…PGYN), 258–293 (VGSG…VPGY), and 337–429 (SYGQ…VMSE). 2 stretches are compositionally biased toward pro residues: residues 221-232 (QPPPPPPPPPAL) and 266-289 (GAPP…PPTT). Composition is skewed to polar residues over residues 337–347 (SYGQQRSTQSP) and 382–418 (LMPS…SSES). Thr400 is subject to Phosphothreonine. Residues Ala489 and 529 to 534 (GTGKTL) each bind ATP.

Belongs to the AAA ATPase family. In terms of assembly, interacts with AKAP8 (via C-terminus). As to expression, widely expressed.

It is found in the nucleus matrix. The protein localises to the cytoplasm. It localises to the cytoskeleton. Its subcellular location is the microtubule organizing center. The protein resides in the centrosome. ATP-dependent microtubule severing protein. Severs microtubules along their length and depolymerizes their ends, primarily the minus-end, suppressing microtubule growth from and attachment to centrosomes. Microtubule severing may promote rapid reorganization of cellular microtubule arrays and the release of microtubules from the centrosome following nucleation. Microtubule release from the mitotic spindle poles may allow depolymerization of the microtubule end proximal to the spindle pole, leading to poleward microtubule flux and poleward motion of chromosome. This chain is Fidgetin (Fign), found in Mus musculus (Mouse).